The primary structure comprises 227 residues: Adenosylcobinamide-GDP ribazoletransferase (227 aa).

Transmembrane regions (helical) follow at residues 3–23, 26–46, 95–115, 117–137, and 165–185; these read CLKA…ELDF, IWAT…AVYF, GVGG…ARPE, WLDY…VAAY, and AVAA…SLFF.

This sequence belongs to the CobS family. Requires Mg(2+) as cofactor.

It is found in the cell membrane. It carries out the reaction alpha-ribazole + adenosylcob(III)inamide-GDP = adenosylcob(III)alamin + GMP + H(+). The enzyme catalyses alpha-ribazole 5'-phosphate + adenosylcob(III)inamide-GDP = adenosylcob(III)alamin 5'-phosphate + GMP + H(+). It participates in cofactor biosynthesis; adenosylcobalamin biosynthesis; adenosylcobalamin from cob(II)yrinate a,c-diamide: step 7/7. Joins adenosylcobinamide-GDP and alpha-ribazole to generate adenosylcobalamin (Ado-cobalamin). Also synthesizes adenosylcobalamin 5'-phosphate from adenosylcobinamide-GDP and alpha-ribazole 5'-phosphate. The chain is Adenosylcobinamide-GDP ribazoletransferase from Pyrobaculum islandicum (strain DSM 4184 / JCM 9189 / GEO3).